Consider the following 242-residue polypeptide: DNA repair protein RecO (242 aa).

The protein belongs to the RecO family.

In terms of biological role, involved in DNA repair and RecF pathway recombination. This is DNA repair protein RecO from Dechloromonas aromatica (strain RCB).